A 204-amino-acid chain; its full sequence is N-(5'-phosphoribosyl)anthranilate isomerase (204 aa).

This sequence belongs to the TrpF family.

The enzyme catalyses N-(5-phospho-beta-D-ribosyl)anthranilate = 1-(2-carboxyphenylamino)-1-deoxy-D-ribulose 5-phosphate. It participates in amino-acid biosynthesis; L-tryptophan biosynthesis; L-tryptophan from chorismate: step 3/5. The protein is N-(5'-phosphoribosyl)anthranilate isomerase of Geobacter sp. (strain M21).